A 159-amino-acid polypeptide reads, in one-letter code: NADH-quinone oxidoreductase subunit B (159 aa).

Residues cysteine 37, cysteine 38, cysteine 102, and cysteine 132 each contribute to the [4Fe-4S] cluster site.

It belongs to the complex I 20 kDa subunit family. NDH-1 is composed of 14 different subunits. Subunits NuoB, C, D, E, F, and G constitute the peripheral sector of the complex. It depends on [4Fe-4S] cluster as a cofactor.

It localises to the cell inner membrane. The catalysed reaction is a quinone + NADH + 5 H(+)(in) = a quinol + NAD(+) + 4 H(+)(out). NDH-1 shuttles electrons from NADH, via FMN and iron-sulfur (Fe-S) centers, to quinones in the respiratory chain. The immediate electron acceptor for the enzyme in this species is believed to be ubiquinone. Couples the redox reaction to proton translocation (for every two electrons transferred, four hydrogen ions are translocated across the cytoplasmic membrane), and thus conserves the redox energy in a proton gradient. The sequence is that of NADH-quinone oxidoreductase subunit B from Variovorax paradoxus (strain S110).